Reading from the N-terminus, the 172-residue chain is Adenine phosphoribosyltransferase (172 aa).

Belongs to the purine/pyrimidine phosphoribosyltransferase family. Homodimer.

Its subcellular location is the cytoplasm. It catalyses the reaction AMP + diphosphate = 5-phospho-alpha-D-ribose 1-diphosphate + adenine. It functions in the pathway purine metabolism; AMP biosynthesis via salvage pathway; AMP from adenine: step 1/1. In terms of biological role, catalyzes a salvage reaction resulting in the formation of AMP, that is energically less costly than de novo synthesis. The chain is Adenine phosphoribosyltransferase from Synechococcus sp. (strain CC9605).